The primary structure comprises 396 residues: Large ribosomal subunit protein uL4A (396 aa).

Positions 352-373 (KAKEKKPDDGKPKAKKPLDAKT) are enriched in basic and acidic residues. Residues 352–374 (KAKEKKPDDGKPKAKKPLDAKTK) form a disordered region.

It belongs to the universal ribosomal protein uL4 family. As to quaternary structure, component of the large ribosomal subunit.

It localises to the cytoplasm. Its function is as follows. Component of the large ribosomal subunit. The ribosome is a large ribonucleoprotein complex responsible for the synthesis of proteins in the cell. The polypeptide is Large ribosomal subunit protein uL4A (rpl4-a) (Xenopus laevis (African clawed frog)).